The chain runs to 197 residues: Translation machinery-associated protein 22 (197 aa).

One can recognise an SUI1 domain in the interval 102 to 173; it reads VQIKRVERNK…DVKEWLLEVY (72 aa).

The protein belongs to the DENR family. Interacts with the 40S ribosomal subunit.

It localises to the cytoplasm. This is Translation machinery-associated protein 22 (tma22) from Aspergillus niger (strain ATCC MYA-4892 / CBS 513.88 / FGSC A1513).